We begin with the raw amino-acid sequence, 131 residues long: Transcriptional activator protein (131 aa).

Residues 13–28 carry the Nuclear localization signal motif; it reads KAQHRIAKKRAVRRRR. A zinc finger lies at 33 to 52; that stretch reads CGCSIYIHINCAKDGNGFTH. Residues 78-131 form a disordered region; the sequence is DVQXGGSTLHAHKDIPHTNPVQPQPEESTKSSQSVPELPSLDGIDSSFWDDIFE. The interval 117–131 is transactivation; the sequence is SLDGIDSSFWDDIFE.

Belongs to the geminiviridae transcriptional activator protein family. Monomer. Homodimer. Homooligomer. Self-interaction correlates with nuclear localization and efficient activation of transcription. Monomers suppress local silencing by interacting with and inactivating host adenosine kinase 2 (ADK2) in the cytoplasm. Interacts with and inhibits host SNF1 kinase. Binds to ssDNA. In terms of processing, phosphorylated.

Its subcellular location is the host nucleus. The protein localises to the host cytoplasm. In terms of biological role, strong activator of the late viral genes promoters. Enhances the expression of the capsid protein and nuclear shuttle protein. Acts as a suppressor of RNA-mediated gene silencing, also known as post-transcriptional gene silencing (PTGS), a mechanism of plant viral defense that limits the accumulation of viral RNAs. Suppresses the host RNA silencing by inhibiting adenosine kinase 2 (ADK2), a kinase involved in a general methylation pathway. Also suppresses the host basal defense by interacting with and inhibiting SNF1 kinase, a key regulator of cell metabolism implicated in innate antiviral defense. Determines pathogenicity. This is Transcriptional activator protein from Cucurbita moschata (Winter crookneck squash).